The chain runs to 184 residues: ATP synthase subunit b, chloroplastic (184 aa).

A helical transmembrane segment spans residues 27 to 49 (LATNLINLSVVLGVLIFFGKGVL).

This sequence belongs to the ATPase B chain family. As to quaternary structure, F-type ATPases have 2 components, F(1) - the catalytic core - and F(0) - the membrane proton channel. F(1) has five subunits: alpha(3), beta(3), gamma(1), delta(1), epsilon(1). F(0) has four main subunits: a(1), b(1), b'(1) and c(10-14). The alpha and beta chains form an alternating ring which encloses part of the gamma chain. F(1) is attached to F(0) by a central stalk formed by the gamma and epsilon chains, while a peripheral stalk is formed by the delta, b and b' chains.

The protein localises to the plastid. The protein resides in the chloroplast thylakoid membrane. In terms of biological role, f(1)F(0) ATP synthase produces ATP from ADP in the presence of a proton or sodium gradient. F-type ATPases consist of two structural domains, F(1) containing the extramembraneous catalytic core and F(0) containing the membrane proton channel, linked together by a central stalk and a peripheral stalk. During catalysis, ATP synthesis in the catalytic domain of F(1) is coupled via a rotary mechanism of the central stalk subunits to proton translocation. Functionally, component of the F(0) channel, it forms part of the peripheral stalk, linking F(1) to F(0). The chain is ATP synthase subunit b, chloroplastic from Lactuca sativa (Garden lettuce).